A 350-amino-acid chain; its full sequence is Ornithine carbamoyltransferase, mitochondrial (350 aa).

A mitochondrion-targeting transit peptide spans 1–30; sequence MLHHMRTIINASWRYGNKCIVRQFGFSQTY. Carbamoyl phosphate is bound by residues 86-90, R137, and H164; that span reads STRTR. R137 contacts L-ornithine. Residues N195, 259–263, 298–301, and R326 contribute to the L-ornithine site; these read DTWVS and HCLP. The active site involves C299. R326 lines the carbamoyl phosphate pocket.

It belongs to the aspartate/ornithine carbamoyltransferase superfamily. OTCase family. Homotrimer. As to expression, liver.

The protein resides in the mitochondrion matrix. It catalyses the reaction carbamoyl phosphate + L-ornithine = L-citrulline + phosphate + H(+). Its pathway is nitrogen metabolism; urea cycle; L-citrulline from L-ornithine and carbamoyl phosphate: step 1/1. In terms of biological role, OTC is necessary for the tadpoles transition from an ammonotelic, aquatic larva to a ureotelic, terrestrial adult. The polypeptide is Ornithine carbamoyltransferase, mitochondrial (Aquarana catesbeiana (American bullfrog)).